Reading from the N-terminus, the 196-residue chain is Spore maturation protein A (196 aa).

4 consecutive transmembrane segments (helical) span residues 1–21 (MVNI…MCNG), 37–57 (AITI…LMKI), 133–153 (ITFL…VIAV), and 163–183 (TDIV…AIII).

It localises to the cell membrane. Its function is as follows. Involved in spore core dehydration; might be involved in the transport of something into or out of the forespore or could be required for some modification of the cortex peptidoglycan structure. The chain is Spore maturation protein A (spmA) from Bacillus subtilis (strain 168).